The sequence spans 393 residues: SH3 domain-binding protein 5-like (393 aa).

Disordered regions lie at residues 1–59 (MAEL…LDPR) and 272–332 (HARR…DTDT). Thr-13 bears the Phosphothreonine mark. The span at 18–28 (LRPEVVEDEVP) shows a compositional bias: basic and acidic residues. 2 positions are modified to phosphoserine: Ser-30 and Ser-49. Coiled-coil stretches lie at residues 59–140 (RIQE…YERA) and 169–272 (WQEM…EQIH). The span at 304 to 313 (GDSGIEGAEG) shows a compositional bias: gly residues. Low complexity predominate over residues 317-332 (EEGSSLGPGPAPDTDT). Phosphoserine occurs at positions 343, 350, 358, 362, and 378. The interval 364-393 (DGQELGTRSGGRRGSDGGVRGGRHQRSVSL) is disordered. Over residues 384–393 (GGRHQRSVSL) the composition is skewed to basic residues.

The protein belongs to the SH3BP5 family.

Functionally, functions as a guanine nucleotide exchange factor (GEF) for RAB11A. This chain is SH3 domain-binding protein 5-like (SH3BP5L), found in Pongo abelii (Sumatran orangutan).